A 244-amino-acid polypeptide reads, in one-letter code: 3-oxoacyl-[acyl-carrier-protein] reductase FabG (244 aa).

NADP(+) is bound by residues 9-12, 60-61, and asparagine 87; these read GASR and NV. Serine 139 contributes to the substrate binding site. The Proton acceptor role is filled by tyrosine 152. Residues 152 to 156 and isoleucine 185 contribute to the NADP(+) site; that span reads YVATK.

Belongs to the short-chain dehydrogenases/reductases (SDR) family. As to quaternary structure, homotetramer.

It carries out the reaction a (3R)-hydroxyacyl-[ACP] + NADP(+) = a 3-oxoacyl-[ACP] + NADPH + H(+). The protein operates within lipid metabolism; fatty acid biosynthesis. In terms of biological role, catalyzes the NADPH-dependent reduction of beta-ketoacyl-ACP substrates to beta-hydroxyacyl-ACP products, the first reductive step in the elongation cycle of fatty acid biosynthesis. The polypeptide is 3-oxoacyl-[acyl-carrier-protein] reductase FabG (fabG) (Staphylococcus epidermidis (strain ATCC 35984 / DSM 28319 / BCRC 17069 / CCUG 31568 / BM 3577 / RP62A)).